A 548-amino-acid chain; its full sequence is Membrane protein insertase YidC (548 aa).

Residues 6 to 26 (NLLVIALLFVSFMIWQAWEQD) form a helical membrane-spanning segment. The disordered stretch occupies residues 28–55 (NPQPQAQQTTQTTTTAAGSAADQGVPAS). A compositionally biased stretch (low complexity) spans 30-50 (QPQAQQTTQTTTTAAGSAADQ). A run of 4 helical transmembrane segments spans residues 350 to 370 (FVGNWGFSIIIITFIVRGIMY), 420 to 440 (LGGCFPLLIQMPIFLALYYML), 458 to 478 (LSAQDPYYILPILMGVTMFFI), and 499 to 519 (PVIFTVFFLWFPSGLVLYYIV).

The protein belongs to the OXA1/ALB3/YidC family. Type 1 subfamily. As to quaternary structure, interacts with the Sec translocase complex via SecD. Specifically interacts with transmembrane segments of nascent integral membrane proteins during membrane integration.

It localises to the cell inner membrane. Its function is as follows. Required for the insertion and/or proper folding and/or complex formation of integral membrane proteins into the membrane. Involved in integration of membrane proteins that insert both dependently and independently of the Sec translocase complex, as well as at least some lipoproteins. Aids folding of multispanning membrane proteins. The polypeptide is Membrane protein insertase YidC (Shigella boydii serotype 18 (strain CDC 3083-94 / BS512)).